Consider the following 606-residue polypeptide: Ribonucleoprotein PTB-binding 1 (606 aa).

The segment at 1–41 (MAADVSVTHRPPLSPKSGAEVEAGDAAERRAPEEELPPLDP) is disordered. N-acetylalanine is present on Ala-2. Residues Ser-6 and Ser-14 each carry the phosphoserine modification. Residues 45–60 (RKRLEHTERQFRNRRK) carry the Nuclear localization signal motif. RRM domains lie at 59-130 (RKIL…LQPT), 132-210 (ALLC…WTDA), and 221-299 (RCLC…FCAP). The tract at residues 307-395 (LAALIAAQAT…QTQGQKKPGI (89 aa)) is interaction with PTBP1. Residues 391 to 474 (KKPGILGDSP…PPAPVGLRGS (84 aa)) are disordered. The segment covering 453-462 (LGLGPPAAQL) has biased composition (low complexity). Thr-463 bears the Phosphothreonine mark. A Phosphoserine modification is found at Ser-474. Phosphothreonine is present on Pro-488. A disordered region spans residues 519–564 (GLLGLSPGPNGHSHLLKVRAGGGDMQGWEAPAPQRPLTRPALPSVS). Residues Ser-562 and His-567 each carry the phosphoserine modification. A disordered region spans residues 579-606 (CPRPSPAQKAAMWASTPRASAATTRTPT). The span at 592-606 (ASTPRASAATTRTPT) shows a compositional bias: low complexity.

Interacts with PTBP1, RAVER2, VCL and ACTN1. Part of a complex containing RAVER1, VCL and ACTN1.

The protein localises to the nucleus. Its subcellular location is the cytoplasm. Its function is as follows. Cooperates with PTBP1 to modulate regulated alternative splicing events. Promotes exon skipping. Cooperates with PTBP1 to modulate switching between mutually exclusive exons during maturation of the TPM1 pre-mRNA. The polypeptide is Ribonucleoprotein PTB-binding 1 (RAVER1) (Homo sapiens (Human)).